A 487-amino-acid chain; its full sequence is Serine/threonine-protein kinase 4 (487 aa).

Met1 carries the post-translational modification N-acetylmethionine. Thr3 carries the post-translational modification Phosphothreonine. A Protein kinase domain is found at 30–281; that stretch reads FDVLEKLGEG…ATQLLQHPFV (252 aa). ATP contacts are provided by residues 36–44 and Lys59; that span reads LGEGSYGSV. The Proton acceptor role is filled by Asp149. The residue at position 183 (Thr183) is a Phosphothreonine; by autocatalysis. Phosphoserine is present on Ser265. Positions 289-311 form a coiled coil; sequence ILRDLINEAMDVKLKRQEAQQRE. The tract at residues 305 to 334 is disordered; sequence QEAQQREVDQDDEENSEEDEMDSGTMVRAA. Residues 313-326 are compositionally biased toward acidic residues; that stretch reads DQDDEENSEEDEMD. At Ser320 the chain carries Phosphoserine. Thr340 and Thr367 each carry phosphothreonine. Position 387 is a phosphothreonine; by PKB/AKT1 (Thr387). Ser410 is modified (phosphoserine). Residue Tyr433 is modified to Phosphotyrosine. The region spanning 433–480 is the SARAH domain; it reads YEFLKSWTVEDLQKRLLALDPMMEQEMEEIRQKYRSKRQPILDAIEAK.

The protein belongs to the protein kinase superfamily. STE Ser/Thr protein kinase family. STE20 subfamily. As to quaternary structure, homodimer; mediated via the coiled-coil region. Interacts with NORE1, which inhibits autoactivation. Interacts with and stabilizes SAV1. Interacts with RASSF1. Interacts with FOXO3. Interacts with RASSF2 (via SARAH domain). Interacts with AR, PKB/AKT1, TNNI3 and SIRT1. Interacts with MARK3 and SCRIB in the presence of DLG5. Interacts with DLG5 (via PDZ domain 3). It depends on Mg(2+) as a cofactor. In terms of processing, autophosphorylated on serine and threonine residues. Phosphorylation at Thr-387 by PKB/AKT1, leads to inhibition of its: kinase activity, nuclear translocation and autophosphorylation at Thr-183. It also diminishes its cleavage by caspases and its ability to phosphorylate FOXO3. Post-translationally, proteolytically cleaved by caspase-3 during apoptosis at Asp-326 resulting in a 37 kDa form. Proteolytic cleavage results in kinase activation and nuclear translocation of the truncated form (MST1/N).

The protein resides in the cytoplasm. The protein localises to the nucleus. It catalyses the reaction L-seryl-[protein] + ATP = O-phospho-L-seryl-[protein] + ADP + H(+). It carries out the reaction L-threonyl-[protein] + ATP = O-phospho-L-threonyl-[protein] + ADP + H(+). Its activity is regulated as follows. Inhibited by the C-terminal non-catalytic region. Activated by caspase-cleavage. Full activation also requires homodimerization and autophosphorylation of Thr-183. Activated by RASSF1 which acts by preventing its dephosphorylation. In terms of biological role, stress-activated, pro-apoptotic kinase which, following caspase-cleavage, enters the nucleus and induces chromatin condensation followed by internucleosomal DNA fragmentation. Key component of the Hippo signaling pathway which plays a pivotal role in organ size control and tumor suppression by restricting proliferation and promoting apoptosis. The core of this pathway is composed of a kinase cascade wherein STK3/MST2 and STK4/MST1, in complex with its regulatory protein SAV1, phosphorylates and activates LATS1/2 in complex with its regulatory protein MOB1, which in turn phosphorylates and inactivates YAP1 oncoprotein and WWTR1/TAZ. Phosphorylation of YAP1 by LATS2 inhibits its translocation into the nucleus to regulate cellular genes important for cell proliferation, cell death, and cell migration. STK3/MST2 and STK4/MST1 are required to repress proliferation of mature hepatocytes, to prevent activation of facultative adult liver stem cells (oval cells), and to inhibit tumor formation. Phosphorylates 'Ser-14' of histone H2B (H2BS14ph) during apoptosis. Phosphorylates FOXO3 upon oxidative stress, which results in its nuclear translocation and cell death initiation. Phosphorylates MOBKL1A, MOBKL1B and RASSF2. Phosphorylates TNNI3 (cardiac Tn-I) and alters its binding affinity to TNNC1 (cardiac Tn-C) and TNNT2 (cardiac Tn-T). Phosphorylates FOXO1 on 'Ser-212' and regulates its activation and stimulates transcription of PMAIP1 in a FOXO1-dependent manner. Phosphorylates SIRT1 and inhibits SIRT1-mediated p53/TP53 deacetylation, thereby promoting p53/TP53 dependent transcription and apoptosis upon DNA damage. Acts as an inhibitor of PKB/AKT1. Phosphorylates AR on 'Ser-650' and suppresses its activity by intersecting with PKB/AKT1 signaling and antagonizing formation of AR-chromatin complexes. This chain is Serine/threonine-protein kinase 4 (Stk4), found in Mus musculus (Mouse).